We begin with the raw amino-acid sequence, 1256 residues long: Splicing factor, arginine/serine-rich 19 (1256 aa).

Disordered regions lie at residues 1-33, 158-343, 371-395, 408-1030, 1112-1152, and 1221-1256; these read MEEE…SPSA, GKTV…APRR, ALSL…PEEE, PRQP…TLPP, GSLP…DKYL, and FRKH…LPPL. Over residues 7-27 the composition is skewed to basic and acidic residues; the sequence is SRGKTEESGEDRGDGPPDRDP. The segment covering 192-206 has biased composition (low complexity); sequence SSASSSPSPSPSSSS. A compositionally biased stretch (pro residues) spans 207-222; the sequence is PSPPPPPPPPPPPALP. The segment covering 227–236 has biased composition (basic and acidic residues); it reads DIYDPFHPTD. The residue at position 240 (Ser240) is a Phosphoserine. Polar residues predominate over residues 255 to 265; sequence TGSNPSSSAGT. The span at 268 to 282 shows a compositional bias: acidic residues; that stretch reads PEEEEEEEEEEEEEG. Phosphothreonine is present on Thr328. Residues 382–393 show a composition bias toward acidic residues; that stretch reads PEIEEGEIVQPE. Positions 412 to 424 are enriched in low complexity; the sequence is PASVATLASVAAP. Phosphoserine occurs at positions 442 and 447. Residues 478 to 489 are compositionally biased toward basic residues; sequence KILTQRRERYRQ. A phosphoserine mark is found at Ser491, Ser493, Ser510, Ser518, and Ser520. Composition is skewed to basic residues over residues 538 to 553 and 560 to 577; these read TARR…RSRS and RGGH…RRRS. Phosphoserine is present on residues Ser577 and Ser579. Basic residues predominate over residues 592 to 611; it reads RERHRGKRREGGKKKKKRSR. A compositionally biased stretch (basic and acidic residues) spans 612-623; it reads SRAEKRSGDLEK. Thr663 is modified (phosphothreonine). Phosphoserine is present on residues Ser676 and Ser682. Tyr689 is subject to Phosphotyrosine. Ser691 and Ser695 each carry phosphoserine. Basic and acidic residues-rich tracts occupy residues 696 to 709 and 719 to 741; these read ADER…DRRR and SREK…DRSS. Composition is skewed to low complexity over residues 752–775 and 793–804; these read PGSG…SCSS and SSTTPAKDSSSS. Lys812 participates in a covalent cross-link: Glycyl lysine isopeptide (Lys-Gly) (interchain with G-Cter in SUMO2). Residues 813–831 are compositionally biased toward basic and acidic residues; it reads FSRDRESRSPFLKPDERAP. 2 positions are modified to phosphoserine: Ser819 and Ser821. Residues 843–875 show a composition bias toward basic residues; the sequence is KPKKTKAKAKAGAKKAKGTKGKTKPSKTRKKVR. Ser876, Ser883, Ser910, and Ser912 each carry phosphoserine. The segment covering 922-935 has biased composition (pro residues); it reads STPPPKVAPPPPAL. 2 positions are modified to phosphothreonine: Thr923 and Thr936. The segment covering 938–947 has biased composition (polar residues); that stretch reads DSQTVDSSCK. Residue Ser939 is modified to Phosphoserine. Phosphothreonine is present on Thr948. The segment covering 969–984 has biased composition (acidic residues); that stretch reads EEEEEEEEEEEEEEEQ. Residues 985–1017 show a composition bias toward low complexity; sequence QPATTTATSTAAAAPSTAPSAGSTAGDSGAEDG. The tract at residues 1131 to 1256 is necessary for interaction with the CTD domain of POLR2A; that stretch reads PASDKREGSS…GGPGLPLPPL (126 aa). A compositionally biased stretch (basic and acidic residues) spans 1133-1152; sequence SDKREGSSSSEGRGDTDKYL. The span at 1244–1256 shows a compositional bias: pro residues; the sequence is PDKGGPGLPLPPL.

Belongs to the splicing factor SR family. Interacts with POLR2A.

It is found in the nucleus. Its function is as follows. May function in pre-mRNA splicing. This is Splicing factor, arginine/serine-rich 19 (Scaf1) from Mus musculus (Mouse).